Consider the following 150-residue polypeptide: Phylloplanin (150 aa).

Positions 1 to 23 (MASAKIFLIFLLAALIATPAAFA) are cleaved as a signal peptide.

Post-translationally, probably covalently linked to cuticular lipids and/or trichome exudate diterpens or sugar esters in order to increase the solubility in exudate and the dispersion on the leaf surface. In terms of tissue distribution, expressed in small glandular secreting trichomes (SGTs).

Its subcellular location is the secreted. In terms of biological role, inhibits spore germination and leaf infection by fungal pathogens. The sequence is that of Phylloplanin from Nicotiana tabacum (Common tobacco).